A 126-amino-acid chain; its full sequence is MPNQYEIYKCIHCGNIVEVLHAGGGDLVCCGEPMKLMKEGTSDGAKEKHVPVIEKTANGYKVTVGSVAHPMEEKHWIEWIELVADGVSYKKFLKPGDAPEAEFCIKADKVVAREYCNLHGHWKAEA.

Fe cation contacts are provided by C10, C13, C29, C30, H49, H69, H75, C116, and H119.

This sequence belongs to the desulfoferrodoxin family. As to quaternary structure, homodimer. Requires Fe(3+) as cofactor. Cu(2+) serves as cofactor.

The enzyme catalyses reduced [rubredoxin] + superoxide + 2 H(+) = oxidized [rubredoxin] + H2O2. Its function is as follows. Catalyzes the one-electron reduction of superoxide anion radical to hydrogen peroxide at a nonheme ferrous iron center. Plays a fundamental role in case of oxidative stress via its superoxide detoxification activity. The polypeptide is Desulfoferrodoxin (dfx) (Nitratidesulfovibrio vulgaris (strain ATCC 29579 / DSM 644 / CCUG 34227 / NCIMB 8303 / VKM B-1760 / Hildenborough) (Desulfovibrio vulgaris)).